We begin with the raw amino-acid sequence, 398 residues long: S-adenosylmethionine synthase 2 (398 aa).

H16 is a binding site for ATP. D18 is a binding site for Mg(2+). E51 contributes to the K(+) binding site. L-methionine is bound by residues E64 and Q108. The segment at 108-118 (QSADIAQGVDA) is flexible loop. Residues 176 to 178 (DSK), 242 to 243 (KF), D251, 257 to 258 (RK), A274, and K278 contribute to the ATP site. D251 serves as a coordination point for L-methionine. K282 lines the L-methionine pocket.

The protein belongs to the AdoMet synthase family. As to quaternary structure, homotetramer; dimer of dimers. Mg(2+) serves as cofactor. The cofactor is K(+).

The protein resides in the cytoplasm. The enzyme catalyses L-methionine + ATP + H2O = S-adenosyl-L-methionine + phosphate + diphosphate. The protein operates within amino-acid biosynthesis; S-adenosyl-L-methionine biosynthesis; S-adenosyl-L-methionine from L-methionine: step 1/1. Catalyzes the formation of S-adenosylmethionine (AdoMet) from methionine and ATP. The overall synthetic reaction is composed of two sequential steps, AdoMet formation and the subsequent tripolyphosphate hydrolysis which occurs prior to release of AdoMet from the enzyme. The chain is S-adenosylmethionine synthase 2 from Rhodopseudomonas palustris (strain BisB18).